The following is an 84-amino-acid chain: Small ribosomal subunit protein uS17 (84 aa).

Belongs to the universal ribosomal protein uS17 family. Part of the 30S ribosomal subunit.

In terms of biological role, one of the primary rRNA binding proteins, it binds specifically to the 5'-end of 16S ribosomal RNA. The sequence is that of Small ribosomal subunit protein uS17 from Legionella pneumophila (strain Paris).